The sequence spans 229 residues: 7-cyano-7-deazaguanine synthase (229 aa).

15–25 is an ATP binding site; sequence LSGGLDSATVV. Residues cysteine 194, cysteine 204, cysteine 207, and cysteine 210 each contribute to the Zn(2+) site.

This sequence belongs to the QueC family. Zn(2+) is required as a cofactor.

It carries out the reaction 7-carboxy-7-deazaguanine + NH4(+) + ATP = 7-cyano-7-deazaguanine + ADP + phosphate + H2O + H(+). Its pathway is purine metabolism; 7-cyano-7-deazaguanine biosynthesis. Its function is as follows. Catalyzes the ATP-dependent conversion of 7-carboxy-7-deazaguanine (CDG) to 7-cyano-7-deazaguanine (preQ(0)). The polypeptide is 7-cyano-7-deazaguanine synthase (Pseudomonas savastanoi pv. phaseolicola (strain 1448A / Race 6) (Pseudomonas syringae pv. phaseolicola (strain 1448A / Race 6))).